The chain runs to 448 residues: N-succinylarginine dihydrolase (448 aa).

Substrate-binding positions include 19-28, N110, and 137-138; these read AGLSYGNVAS and HR. E174 is a catalytic residue. Residue R214 participates in substrate binding. H250 is an active-site residue. D252 and N364 together coordinate substrate. C370 acts as the Nucleophile in catalysis.

It belongs to the succinylarginine dihydrolase family. Homodimer.

It catalyses the reaction N(2)-succinyl-L-arginine + 2 H2O + 2 H(+) = N(2)-succinyl-L-ornithine + 2 NH4(+) + CO2. Its pathway is amino-acid degradation; L-arginine degradation via AST pathway; L-glutamate and succinate from L-arginine: step 2/5. Its function is as follows. Catalyzes the hydrolysis of N(2)-succinylarginine into N(2)-succinylornithine, ammonia and CO(2). This is N-succinylarginine dihydrolase from Pseudoalteromonas translucida (strain TAC 125).